Reading from the N-terminus, the 760-residue chain is 5-methyltetrahydropteroyltriglutamate--homocysteine methyltransferase (760 aa).

Residues arginine 17–lysine 20 and lysine 118 contribute to the 5-methyltetrahydropteroyltri-L-glutamate site. Residues isoleucine 436–serine 438 and glutamate 489 contribute to the L-homocysteine site. Residues isoleucine 436–serine 438 and glutamate 489 each bind L-methionine. 5-methyltetrahydropteroyltri-L-glutamate-binding positions include arginine 520 to cysteine 521 and tryptophan 566. L-homocysteine is bound at residue aspartate 604. Aspartate 604 is an L-methionine binding site. Position 610 (glutamate 610) interacts with 5-methyltetrahydropteroyltri-L-glutamate. 3 residues coordinate Zn(2+): histidine 646, cysteine 648, and glutamate 670. Catalysis depends on histidine 699, which acts as the Proton donor. Zn(2+) is bound at residue cysteine 731.

It belongs to the vitamin-B12 independent methionine synthase family. Requires Zn(2+) as cofactor.

The catalysed reaction is 5-methyltetrahydropteroyltri-L-glutamate + L-homocysteine = tetrahydropteroyltri-L-glutamate + L-methionine. Its pathway is amino-acid biosynthesis; L-methionine biosynthesis via de novo pathway; L-methionine from L-homocysteine (MetE route): step 1/1. Catalyzes the transfer of a methyl group from 5-methyltetrahydrofolate to homocysteine resulting in methionine formation. This Vibrio harveyi (Beneckea harveyi) protein is 5-methyltetrahydropteroyltriglutamate--homocysteine methyltransferase.